A 261-amino-acid chain; its full sequence is tRNA pseudouridine synthase A (261 aa).

Aspartate 51 functions as the Nucleophile in the catalytic mechanism. Tyrosine 109 is a substrate binding site.

Belongs to the tRNA pseudouridine synthase TruA family. Homodimer.

It carries out the reaction uridine(38/39/40) in tRNA = pseudouridine(38/39/40) in tRNA. Functionally, formation of pseudouridine at positions 38, 39 and 40 in the anticodon stem and loop of transfer RNAs. The protein is tRNA pseudouridine synthase A of Shewanella sp. (strain MR-4).